The sequence spans 63 residues: ATP synthase membrane subunit K, mitochondrial (63 aa).

The helical transmembrane segment at 15 to 37 (TMRGRANVAKATWASLGLVYVLV) threads the bilayer.

F-type ATPases have 2 components, CF(1) - the catalytic core - and CF(0) - the membrane proton channel. CF(1) has five subunits: alpha(3), beta(3), gamma(1), delta(1), epsilon(1). CF(0) has three main subunits: a, b and c. The ATP synthase complex/complex V exists as a monomeric and a dimeric supercomplex that helps shape mitochondrial cristae to optimize proton flow.

Its subcellular location is the mitochondrion membrane. In terms of biological role, mitochondrial membrane ATP synthase (F(1)F(0) ATP synthase or Complex V) produces ATP from ADP in the presence of a proton gradient across the membrane which is generated by electron transport complexes of the respiratory chain. F-type ATPases consist of two structural domains, F(1) - containing the extramembraneous catalytic core and F(0) - containing the membrane proton channel, linked together by a central stalk and a peripheral stalk. During catalysis, ATP synthesis in the catalytic domain of F(1) is coupled via a rotary mechanism of the central stalk subunits to proton translocation. ATP5MK is a minor subunit of the mitochondrial membrane ATP synthase required for dimerization of the ATP synthase complex and as such regulates ATP synthesis in the mitochondria. This Drosophila melanogaster (Fruit fly) protein is ATP synthase membrane subunit K, mitochondrial.